Consider the following 193-residue polypeptide: Naphthalene 1,2-dioxygenase system, small oxygenase component (193 aa).

It belongs to the bacterial ring-hydroxylating dioxygenase beta subunit family. In terms of assembly, the naphthalene dioxygenase (NDO) multicomponent enzyme system is composed of an electron transfer component and a dioxygenase component (iron sulfur protein (ISP)). The electron transfer component is composed of a ferredoxin reductase (NdoR) and a ferredoxin (NdoA), and the dioxygenase component is formed of a heterohexamer (trimer of heterodimers) of three large alpha subunits (NdoB) and three small beta subunits (NdoC).

The protein operates within aromatic compound metabolism; naphthalene degradation. Component of the naphthalene dioxygenase (NDO) multicomponent enzyme system which catalyzes the incorporation of both atoms of molecular oxygen into naphthalene to form cis-(1R,2S)-dihydroxy-1,2-dihydronaphthalene. The beta subunit seems to have a structural role in the holoenzyme. This is Naphthalene 1,2-dioxygenase system, small oxygenase component from Pseudomonas aeruginosa.